A 313-amino-acid chain; its full sequence is tRNA dimethylallyltransferase (313 aa).

17-24 contributes to the ATP binding site; it reads GPTASGKT. 19–24 contributes to the substrate binding site; that stretch reads TASGKT. Interaction with substrate tRNA stretches follow at residues 42–45, 166–170, and 247–252; these read DSAL, QRLSR, and RCVGYR.

It belongs to the IPP transferase family. As to quaternary structure, monomer. The cofactor is Mg(2+).

The enzyme catalyses adenosine(37) in tRNA + dimethylallyl diphosphate = N(6)-dimethylallyladenosine(37) in tRNA + diphosphate. Its function is as follows. Catalyzes the transfer of a dimethylallyl group onto the adenine at position 37 in tRNAs that read codons beginning with uridine, leading to the formation of N6-(dimethylallyl)adenosine (i(6)A). The chain is tRNA dimethylallyltransferase from Yersinia pseudotuberculosis serotype O:1b (strain IP 31758).